Consider the following 151-residue polypeptide: Ubiquitin-conjugating enzyme E2 2 (151 aa).

The interval 1–26 is disordered; sequence MSTSARRRLMRDFKRMQTDPPAGVSA. The 147-residue stretch at 4–150 folds into the UBC core domain; it reads SARRRLMRDF…VRETVEKSWE (147 aa). The active-site Glycyl thioester intermediate is the cysteine 88.

It belongs to the ubiquitin-conjugating enzyme family.

The protein localises to the cytoplasm. The protein resides in the nucleus. The catalysed reaction is S-ubiquitinyl-[E1 ubiquitin-activating enzyme]-L-cysteine + [E2 ubiquitin-conjugating enzyme]-L-cysteine = [E1 ubiquitin-activating enzyme]-L-cysteine + S-ubiquitinyl-[E2 ubiquitin-conjugating enzyme]-L-cysteine.. Its pathway is protein modification; protein ubiquitination. Catalyzes the covalent attachment of ubiquitin to other proteins. Plays a role in transcription regulation by catalyzing the monoubiquitination of histone H2B to form H2BK123ub1. H2BK123ub1 gives a specific tag for epigenetic transcriptional activation and is also a prerequisite for H3K4me and H3K79me formation. Also involved in postreplication repair of UV-damaged DNA, in N-end rule-dependent protein degradation and in sporulation. This is Ubiquitin-conjugating enzyme E2 2 (ubc2) from Aspergillus fumigatus (strain ATCC MYA-4609 / CBS 101355 / FGSC A1100 / Af293) (Neosartorya fumigata).